The chain runs to 46 residues: uncharacterized protein (46 aa).

The protein localises to the plastid. It localises to the chloroplast. This is an uncharacterized protein from Trieres chinensis (Marine centric diatom).